The following is a 349-amino-acid chain: MFEQEMYDVTIIGGGPAGLYSSFYCGLREMKTKLIESQPQLGGKIHVYPEKMIWDIGGVTPISGGQLIKQLVEQALTFNPSIYTDEKVLSIAKNDEGIFVITAESGNIHYSKTVIVAIGGGILNPQKIEIEGAERFEVSNLNYTIKSYEKFKNKAVIISGGGNTAVDWALELMEVASKVYLTYRKDQLSAHEAQITELTNSAIECHYNSEITKLIADDQEGMIKAIALTNHETGTITEIPIDEVVISHGYVRDKELLDNSPLAIERKNDYFIAGTINSESSIPGLYAAGDILHHDGKIHLIAAAFHDALHAVNSAKKYIQPDASDGGIVSSHNDIFKQRNRKLLQESLK.

FAD-binding residues include Glu-36, Lys-44, Tyr-48, Val-88, Leu-123, Asp-290, and Ser-331.

Belongs to the ferredoxin--NADP reductase type 2 family. Homodimer. FAD is required as a cofactor.

It catalyses the reaction 2 reduced [2Fe-2S]-[ferredoxin] + NADP(+) + H(+) = 2 oxidized [2Fe-2S]-[ferredoxin] + NADPH. This Lysinibacillus sphaericus (strain C3-41) protein is Ferredoxin--NADP reductase 1.